A 1069-amino-acid chain; its full sequence is Cellulose synthase A catalytic subunit 5 [UDP-forming] (1069 aa).

Methionine 1 carries the N-acetylmethionine modification. Residues 1–265 (MNTGGRLIAG…KSSKINPYRM (265 aa)) lie on the Cytoplasmic side of the membrane. The Zn(2+) site is built by cysteine 39, cysteine 42, cysteine 58, cysteine 61, cysteine 66, cysteine 69, cysteine 81, and cysteine 84. The segment at 39–85 (CQICGDEIELSVDGESFVACNECAFPVCRPCYEYERREGNQSCPQCK) adopts an RING-type; degenerate zinc-finger fold. Phosphoserine is present on residues serine 229 and serine 230. Residues 266–286 (LIVLRLVILGLFFHYRILHPV) traverse the membrane as a helical segment. Over 287–288 (ND) the chain is Extracellular. A helical transmembrane segment spans residues 289-309 (AYALWLISVICEIWFAVSWVL). Residues 310 to 853 (DQFPKWYPIE…INSVVYPWTS (544 aa)) are Cytoplasmic-facing. UDP-alpha-D-glucose is bound by residues serine 348, lysine 354, glutamate 355, and aspartate 384. Aspartate 384 is an active-site residue. Positions 438–464 (VRERRAMKRDYEEFKVKINALVATAQK) form a coiled coil. UDP-alpha-D-glucose is bound at residue lysine 525. 2 residues coordinate Mn(2+): lysine 526 and aspartate 550. Residue aspartate 770 is part of the active site. A helical transmembrane segment spans residues 854–874 (IPLLVYCSLPAICLLTGKFIV). Residues 875 to 879 (PEISN) are Extracellular-facing. A helical transmembrane segment spans residues 880–900 (YASILFMALFGSIAVTGILEM). The Cytoplasmic segment spans residues 901-915 (QWGKVGIDDWWRNEQ). A helical transmembrane segment spans residues 916–936 (FWVIGGVSAHLFALFQGLLKV). Topologically, residues 937 to 965 (LAGVETNFTVTSKAADDGEFSELYIFKWT) are extracellular. The N-linked (GlcNAc...) asparagine glycan is linked to asparagine 943. Residues 966–986 (SLLIPPTTLLIINVIGVIVGI) form a helical membrane-spanning segment. Residues 987–997 (SDAISNGYDSW) lie on the Cytoplasmic side of the membrane. Residues 998-1018 (GPLFGRLFFAFWVILHLYPFL) traverse the membrane as a helical segment. Residues 1019-1027 (KGLLGKQDR) lie on the Extracellular side of the membrane. Residues 1028–1048 (MPTIILVWSILLASILTLLWV) traverse the membrane as a helical segment. Residues 1049–1069 (RVNPFVAKGGPILEICGLDCL) are Cytoplasmic-facing.

It belongs to the glycosyltransferase 2 family. Plant cellulose synthase subfamily. The cofactor is Zn(2+). It depends on Mn(2+) as a cofactor. As to expression, expressed in young plants, stems and flowers.

Its subcellular location is the cell membrane. The enzyme catalyses [(1-&gt;4)-beta-D-glucosyl](n) + UDP-alpha-D-glucose = [(1-&gt;4)-beta-D-glucosyl](n+1) + UDP + H(+). The protein operates within glycan metabolism; plant cellulose biosynthesis. In terms of biological role, catalytic subunit of cellulose synthase terminal complexes ('rosettes'), required for beta-1,4-glucan microfibril crystallization, a major mechanism of the cell wall formation. In Arabidopsis thaliana (Mouse-ear cress), this protein is Cellulose synthase A catalytic subunit 5 [UDP-forming].